Consider the following 418-residue polypeptide: Light-independent protochlorophyllide reductase subunit N (418 aa).

[4Fe-4S] cluster contacts are provided by Cys-17, Cys-42, and Cys-103.

The protein belongs to the BchN/ChlN family. As to quaternary structure, protochlorophyllide reductase is composed of three subunits; ChlL, ChlN and ChlB. Forms a heterotetramer of two ChlB and two ChlN subunits. [4Fe-4S] cluster is required as a cofactor.

It carries out the reaction chlorophyllide a + oxidized 2[4Fe-4S]-[ferredoxin] + 2 ADP + 2 phosphate = protochlorophyllide a + reduced 2[4Fe-4S]-[ferredoxin] + 2 ATP + 2 H2O. It participates in porphyrin-containing compound metabolism; chlorophyll biosynthesis (light-independent). In terms of biological role, component of the dark-operative protochlorophyllide reductase (DPOR) that uses Mg-ATP and reduced ferredoxin to reduce ring D of protochlorophyllide (Pchlide) to form chlorophyllide a (Chlide). This reaction is light-independent. The NB-protein (ChlN-ChlB) is the catalytic component of the complex. The polypeptide is Light-independent protochlorophyllide reductase subunit N (Prochlorococcus marinus subsp. pastoris (strain CCMP1986 / NIES-2087 / MED4)).